A 298-amino-acid chain; its full sequence is Protoheme IX farnesyltransferase (298 aa).

The next 8 helical transmembrane spans lie at 23-43 (VTQL…PGLP), 49-69 (LFGT…NCLI), 95-115 (VLSL…HLVN), 117-137 (LTMW…TVIL), 144-164 (NIVI…ASVA), 171-191 (AWVL…ALAL), 234-254 (FMHM…GIFV), and 276-296 (SILY…VGVL).

Belongs to the UbiA prenyltransferase family. Protoheme IX farnesyltransferase subfamily.

It is found in the cell inner membrane. It catalyses the reaction heme b + (2E,6E)-farnesyl diphosphate + H2O = Fe(II)-heme o + diphosphate. It functions in the pathway porphyrin-containing compound metabolism; heme O biosynthesis; heme O from protoheme: step 1/1. Functionally, converts heme B (protoheme IX) to heme O by substitution of the vinyl group on carbon 2 of heme B porphyrin ring with a hydroxyethyl farnesyl side group. The polypeptide is Protoheme IX farnesyltransferase (Bordetella avium (strain 197N)).